The following is a 428-amino-acid chain: 2-isopropylmalate synthase 2 (428 aa).

Positions 40–302 (PFFMDVTLRD…EVPLNFSTIY (263 aa)) constitute a Pyruvate carboxyltransferase domain. Mn(2+) contacts are provided by Asp49, His241, His243, and Asn277.

This sequence belongs to the alpha-IPM synthase/homocitrate synthase family. LeuA type 1 subfamily. Homodimer. The cofactor is Mn(2+).

Its subcellular location is the cytoplasm. The enzyme catalyses 3-methyl-2-oxobutanoate + acetyl-CoA + H2O = (2S)-2-isopropylmalate + CoA + H(+). Its pathway is amino-acid biosynthesis; L-leucine biosynthesis; L-leucine from 3-methyl-2-oxobutanoate: step 1/4. In terms of biological role, catalyzes the condensation of the acetyl group of acetyl-CoA with 3-methyl-2-oxobutanoate (2-ketoisovalerate) to form 3-carboxy-3-hydroxy-4-methylpentanoate (2-isopropylmalate). Has high alpha-isopropylmalate synthase activity and low citramalate synthase activity. This Leptospira interrogans serogroup Icterohaemorrhagiae serovar Lai (strain 56601) protein is 2-isopropylmalate synthase 2.